The sequence spans 564 residues: Phenylalanine--tRNA ligase beta subunit (564 aa).

In terms of domain architecture, B5 spans 286–362 (YFQNMLEVNV…IGMGLDSFKP (77 aa)). D340, D346, E349, and E350 together coordinate Mg(2+).

Belongs to the phenylalanyl-tRNA synthetase beta subunit family. Type 2 subfamily. In terms of assembly, tetramer of two alpha and two beta subunits. Mg(2+) serves as cofactor.

The protein localises to the cytoplasm. It carries out the reaction tRNA(Phe) + L-phenylalanine + ATP = L-phenylalanyl-tRNA(Phe) + AMP + diphosphate + H(+). This chain is Phenylalanine--tRNA ligase beta subunit, found in Borrelia turicatae (strain 91E135).